Consider the following 304-residue polypeptide: Cell surface-binding protein OPG105 (304 aa).

Belongs to the alpha-carbonic anhydrase family. In terms of assembly, homodimer; disulfide-linked. Apparently non-glycosylated.

It localises to the virion membrane. In terms of biological role, binds to chondroitin sulfate on the cell surface to provide virion attachment to target cell. This chain is Cell surface-binding protein OPG105 (OPG105), found in Monkeypox virus.